Reading from the N-terminus, the 222-residue chain is Adenylate kinase, chloroplastic (222 aa).

Residue 15 to 20 participates in ATP binding; the sequence is ASGKGT. The NMP stretch occupies residues 35 to 64; it reads SAGDLLRAEIAAGSENGKRAKEFMEKGQLV. Residues arginine 41, 62–64, 91–94, and glutamine 98 contribute to the AMP site; these read QLV and GYPR. The LID stretch occupies residues 128–161; that stretch reads GRRLDPVTGKIYHLKYSPPENEEIASRLTQRFDD. An ATP-binding site is contributed by arginine 129. Arginine 158 provides a ligand contact to AMP. Alanine 195 provides a ligand contact to ATP.

As to quaternary structure, monomer.

The protein localises to the plastid. Its subcellular location is the chloroplast. It catalyses the reaction AMP + ATP = 2 ADP. In terms of biological role, catalyzes the reversible transfer of the terminal phosphate group between ATP and AMP. Plays an important role in cellular energy homeostasis and in adenine nucleotide metabolism. The maize enzyme also works with CMP, albeit with 10% of the activity with AMP. In Zea mays (Maize), this protein is Adenylate kinase, chloroplastic (ADK1).